We begin with the raw amino-acid sequence, 472 residues long: Chromosomal replication initiator protein DnaA (472 aa).

The domain I, interacts with DnaA modulators stretch occupies residues Met1–Glu73. Residues Glu73–Ser128 are domain II. The segment at Val89 to Gly127 is disordered. Basic and acidic residues predominate over residues Ala97–Ser112. A compositionally biased stretch (low complexity) spans His113–Ala124. The domain III, AAA+ region stretch occupies residues Pro129–Ser351. Residues Gly176, Gly178, Lys179, and Thr180 each coordinate ATP. The domain IV, binds dsDNA stretch occupies residues Lys352–Glu472.

This sequence belongs to the DnaA family. In terms of assembly, oligomerizes as a right-handed, spiral filament on DNA at oriC.

It is found in the cytoplasm. Plays an essential role in the initiation and regulation of chromosomal replication. ATP-DnaA binds to the origin of replication (oriC) to initiate formation of the DNA replication initiation complex once per cell cycle. Binds the DnaA box (a 9 base pair repeat at the origin) and separates the double-stranded (ds)DNA. Forms a right-handed helical filament on oriC DNA; dsDNA binds to the exterior of the filament while single-stranded (ss)DNA is stabiized in the filament's interior. The ATP-DnaA-oriC complex binds and stabilizes one strand of the AT-rich DNA unwinding element (DUE), permitting loading of DNA polymerase. After initiation quickly degrades to an ADP-DnaA complex that is not apt for DNA replication. Binds acidic phospholipids. In Rhodopseudomonas palustris (strain BisB5), this protein is Chromosomal replication initiator protein DnaA.